Consider the following 70-residue polypeptide: MKPGIHPEYAVITANCTCGNVIKVNSTAGKDLHLDVCGACHPFYTGTQKVVDTGGRIDKFNKRFGMLGKK.

4 residues coordinate Zn(2+): cysteine 16, cysteine 18, cysteine 37, and cysteine 40.

This sequence belongs to the bacterial ribosomal protein bL31 family. Type A subfamily. In terms of assembly, part of the 50S ribosomal subunit. It depends on Zn(2+) as a cofactor.

In terms of biological role, binds the 23S rRNA. The sequence is that of Large ribosomal subunit protein bL31 from Shewanella sp. (strain MR-4).